Consider the following 55-residue polypeptide: uncharacterized protein (55 aa).

A run of 2 helical transmembrane segments spans residues 2-19 (VIGLFVLSIVMLIVSFIA) and 24-46 (LLSIMISFLLFTSAVVLAMFRYF).

Its subcellular location is the cell membrane. This is an uncharacterized protein from Alkalihalophilus pseudofirmus (strain ATCC BAA-2126 / JCM 17055 / OF4) (Bacillus pseudofirmus).